The following is a 430-amino-acid chain: Lipoyl synthase, chloroplastic (430 aa).

Over residues methionine 1–arginine 16 the composition is skewed to polar residues. Residues methionine 1 to arginine 40 constitute a chloroplast transit peptide. Disordered stretches follow at residues methionine 1–valine 55 and histidine 85–alanine 119. Positions lysine 91–alanine 119 are enriched in low complexity. [4Fe-4S] cluster is bound by residues cysteine 155, cysteine 160, cysteine 166, cysteine 183, cysteine 187, cysteine 190, and serine 397. The region spanning cysteine 166–arginine 386 is the Radical SAM core domain.

It belongs to the radical SAM superfamily. Lipoyl synthase family. [4Fe-4S] cluster serves as cofactor.

Its subcellular location is the plastid. It is found in the chloroplast. The catalysed reaction is [[Fe-S] cluster scaffold protein carrying a second [4Fe-4S](2+) cluster] + N(6)-octanoyl-L-lysyl-[protein] + 2 oxidized [2Fe-2S]-[ferredoxin] + 2 S-adenosyl-L-methionine + 4 H(+) = [[Fe-S] cluster scaffold protein] + N(6)-[(R)-dihydrolipoyl]-L-lysyl-[protein] + 4 Fe(3+) + 2 hydrogen sulfide + 2 5'-deoxyadenosine + 2 L-methionine + 2 reduced [2Fe-2S]-[ferredoxin]. It participates in protein modification; protein lipoylation via endogenous pathway; protein N(6)-(lipoyl)lysine from octanoyl-[acyl-carrier-protein]: step 2/2. Catalyzes the radical-mediated insertion of two sulfur atoms into the C-6 and C-8 positions of the octanoyl moiety bound to the lipoyl domains of lipoate-dependent enzymes, thereby converting the octanoylated domains into lipoylated derivatives. The chain is Lipoyl synthase, chloroplastic from Chlamydomonas reinhardtii (Chlamydomonas smithii).